The following is a 145-amino-acid chain: Ribosomal RNA large subunit methyltransferase H (145 aa).

S-adenosyl-L-methionine is bound by residues L64, G93, and 112 to 117 (LSPLTF).

It belongs to the RNA methyltransferase RlmH family. In terms of assembly, homodimer.

The protein localises to the cytoplasm. It catalyses the reaction pseudouridine(1915) in 23S rRNA + S-adenosyl-L-methionine = N(3)-methylpseudouridine(1915) in 23S rRNA + S-adenosyl-L-homocysteine + H(+). Its function is as follows. Specifically methylates the pseudouridine at position 1915 (m3Psi1915) in 23S rRNA. The polypeptide is Ribosomal RNA large subunit methyltransferase H (Prochlorococcus marinus (strain MIT 9211)).